We begin with the raw amino-acid sequence, 61 residues long: Small ribosomal subunit protein uS14 (61 aa).

The Zn(2+) site is built by cysteine 24, cysteine 27, cysteine 40, and cysteine 43.

Belongs to the universal ribosomal protein uS14 family. Zinc-binding uS14 subfamily. In terms of assembly, part of the 30S ribosomal subunit. Contacts proteins S3 and S10. Zn(2+) is required as a cofactor.

Binds 16S rRNA, required for the assembly of 30S particles and may also be responsible for determining the conformation of the 16S rRNA at the A site. The polypeptide is Small ribosomal subunit protein uS14 (Sulfurovum sp. (strain NBC37-1)).